Reading from the N-terminus, the 464-residue chain is MKHDELAAVILAAGKGTRMKSEQPKVLHPIAGKPMVTFPVAGALKHGCQPTVLVVGHGAEAVQAELAEDPVSFALQSEQLGTGHALLCARQALQEFSGTLLLLCGDVPLLRDETLERLIAEHEKTRAAVTVLTAELSQPFGYGRILREGDEVLGIVEEKDASSEQKTIREINTGIYAFEAPFVFEALSGVGCDNAQREYYLTDVLAAARAAGRRVGAVVLEDADEAMGINDRVQLAQASALMRRRINENLMRAGVSFIDPEQTYIEPQVEIGPDSVIYPGVCLGGDTRIGSGCLIEAQVTIRDCQLADNVHVKPGSVLEGSRVGSDTAIGPMAHLRPGTVLAGHNKIGNFVETKKAHIGLGSKASHLTYIGDAELGANVNIGCGTITCNYDGVNKHKTVIEDDVFVGSDTQFVAPVHIGRNSLIGAGSTITKDVPPNALALSRSQQRVVADWRLRHDPKCKNKD.

The segment at Met1–Arg232 is pyrophosphorylase. UDP-N-acetyl-alpha-D-glucosamine contacts are provided by residues Leu11–Gly14, Lys25, Gln76, and Gly81–Thr82. Asp106 lines the Mg(2+) pocket. Residues Gly143, Glu157, Asn172, and Asn230 each contribute to the UDP-N-acetyl-alpha-D-glucosamine site. Asn230 is a Mg(2+) binding site. Residues Val233–Ala253 form a linker region. Residues Gly254–Asp464 form an N-acetyltransferase region. UDP-N-acetyl-alpha-D-glucosamine-binding residues include Arg336 and Lys354. His366 acts as the Proton acceptor in catalysis. Residues Tyr369 and Asn380 each contribute to the UDP-N-acetyl-alpha-D-glucosamine site. Residues Asn389–Tyr390, Ser408, Ala426, and Arg443 contribute to the acetyl-CoA site.

In the N-terminal section; belongs to the N-acetylglucosamine-1-phosphate uridyltransferase family. The protein in the C-terminal section; belongs to the transferase hexapeptide repeat family. Homotrimer. Requires Mg(2+) as cofactor.

It is found in the cytoplasm. It carries out the reaction alpha-D-glucosamine 1-phosphate + acetyl-CoA = N-acetyl-alpha-D-glucosamine 1-phosphate + CoA + H(+). It catalyses the reaction N-acetyl-alpha-D-glucosamine 1-phosphate + UTP + H(+) = UDP-N-acetyl-alpha-D-glucosamine + diphosphate. The protein operates within nucleotide-sugar biosynthesis; UDP-N-acetyl-alpha-D-glucosamine biosynthesis; N-acetyl-alpha-D-glucosamine 1-phosphate from alpha-D-glucosamine 6-phosphate (route II): step 2/2. It functions in the pathway nucleotide-sugar biosynthesis; UDP-N-acetyl-alpha-D-glucosamine biosynthesis; UDP-N-acetyl-alpha-D-glucosamine from N-acetyl-alpha-D-glucosamine 1-phosphate: step 1/1. It participates in bacterial outer membrane biogenesis; LPS lipid A biosynthesis. Functionally, catalyzes the last two sequential reactions in the de novo biosynthetic pathway for UDP-N-acetylglucosamine (UDP-GlcNAc). The C-terminal domain catalyzes the transfer of acetyl group from acetyl coenzyme A to glucosamine-1-phosphate (GlcN-1-P) to produce N-acetylglucosamine-1-phosphate (GlcNAc-1-P), which is converted into UDP-GlcNAc by the transfer of uridine 5-monophosphate (from uridine 5-triphosphate), a reaction catalyzed by the N-terminal domain. The polypeptide is Bifunctional protein GlmU (Syntrophotalea carbinolica (strain DSM 2380 / NBRC 103641 / GraBd1) (Pelobacter carbinolicus)).